Reading from the N-terminus, the 304-residue chain is PTB domain-containing engulfment adapter protein 1 (304 aa).

T16 carries the post-translational modification Phosphothreonine. Residues 21 to 176 enclose the PID domain; the sequence is SKHYIPYNAK…AGMQKRIQDL (156 aa). Residues 159–200 adopt a coiled-coil conformation; sequence DVETRKQIAGMQKRIQDLETENMELKNKVQDLESRLRTTQVS. The residue at position 223 (S223) is a Phosphoserine.

The protein belongs to the ced-6 family. As to quaternary structure, homodimer. Interacts with clathrin and MEGF10. Interacts with GDP-bound ARF6, but not with GTP-bound ARF6. Part of a complex composed of GULP1, ACAP1 and ARF6. Interacts with ACAP1, LRP1 and STAB2. As to expression, detected throughout the brain, particularly in Purkinje cells, hippocampal and cortical neurons (at protein level).

The protein localises to the cytoplasm. In terms of biological role, modulates cellular glycosphingolipid and cholesterol transport. May play a role in the internalization of various LRP1 ligands, such as PSAP. May function as an adapter protein. Required for efficient phagocytosis of apoptotic cells. Increases cellular levels of GTP-bound ARF6. In Mus musculus (Mouse), this protein is PTB domain-containing engulfment adapter protein 1 (Gulp1).